Consider the following 526-residue polypeptide: Putative NipSnap protein K02D10.1 (526 aa).

This sequence belongs to the NipSnap family.

The protein is Putative NipSnap protein K02D10.1 of Caenorhabditis elegans.